The following is a 563-amino-acid chain: Arginine--tRNA ligase (563 aa).

Positions 134 to 144 (ANPTGLLHMGN) match the 'HIGH' region motif.

The protein belongs to the class-I aminoacyl-tRNA synthetase family. In terms of assembly, monomer.

It localises to the cytoplasm. The enzyme catalyses tRNA(Arg) + L-arginine + ATP = L-arginyl-tRNA(Arg) + AMP + diphosphate. The sequence is that of Arginine--tRNA ligase from Heliobacterium modesticaldum (strain ATCC 51547 / Ice1).